A 480-amino-acid polypeptide reads, in one-letter code: Altronate oxidoreductase (480 aa).

Residue 19–30 participates in NAD(+) binding; that stretch reads ILQFGEGNFLRG.

This sequence belongs to the mannitol dehydrogenase family. UxaB subfamily.

It carries out the reaction D-altronate + NAD(+) = keto-D-tagaturonate + NADH + H(+). The protein operates within carbohydrate metabolism; pentose and glucuronate interconversion. The sequence is that of Altronate oxidoreductase from Bacillus subtilis (strain 168).